We begin with the raw amino-acid sequence, 870 residues long: Radial spoke head 10 homolog B (870 aa).

The segment covering 1–16 (MVKEKKKADKKGEKSA) has biased composition (basic and acidic residues). The disordered stretch occupies residues 1 to 43 (MVKEKKKADKKGEKSARSPSSLSDNLDFSKQDGNTTRQEMSPA). Residues 17–39 (RSPSSLSDNLDFSKQDGNTTRQE) are compositionally biased toward polar residues. 10 MORN repeats span residues 86–108 (YEGE…GGCT), 109–131 (YRGM…DGLK), 132–154 (YEGD…DGSM), 155–177 (YEGE…TQPV), 179–201 (YIGH…QEGT), 204–226 (YEGD…SGNI), 227–249 (YEGQ…TTNE), 251–273 (YTGR…LKRI), 284–306 (YIGE…SGAM), and 307–329 (YDGE…NGRV). Residues 674–704 (NKSPSAVMSHESDAAHSDSARSSSSKLELSP) form a disordered region. Positions 683-692 (HESDAAHSDS) are enriched in basic and acidic residues. The span at 693 to 703 (ARSSSSKLELS) shows a compositional bias: low complexity. Residues 784-811 (KEKIRADRLRSTAQAQQRKMEDDELEAR) are a coiled coil. Residues 840-870 (VSSSHLILDPPKEDVTVSPSSKTITSKKKKK) form a disordered region.

Interacts with RSPH6A. Does not appear to be part of the axonemal radial spoke complexes 1 or 2.

The protein localises to the cytoplasm. The protein resides in the cytoskeleton. It localises to the cilium axoneme. It is found in the cell projection. Its subcellular location is the cilium. The protein localises to the flagellum. Its function is as follows. May function as part of the axonemal radial spoke complex 3 (RS3). Radial spoke complexes are important for ciliary motility. The sequence is that of Radial spoke head 10 homolog B (RSPH10B) from Homo sapiens (Human).